The primary structure comprises 281 residues: ATP phosphoribosyltransferase (281 aa).

This sequence belongs to the ATP phosphoribosyltransferase family. Long subfamily. It depends on Mg(2+) as a cofactor.

It is found in the cytoplasm. It carries out the reaction 1-(5-phospho-beta-D-ribosyl)-ATP + diphosphate = 5-phospho-alpha-D-ribose 1-diphosphate + ATP. Its pathway is amino-acid biosynthesis; L-histidine biosynthesis; L-histidine from 5-phospho-alpha-D-ribose 1-diphosphate: step 1/9. With respect to regulation, feedback inhibited by histidine. Its function is as follows. Catalyzes the condensation of ATP and 5-phosphoribose 1-diphosphate to form N'-(5'-phosphoribosyl)-ATP (PR-ATP). Has a crucial role in the pathway because the rate of histidine biosynthesis seems to be controlled primarily by regulation of HisG enzymatic activity. The protein is ATP phosphoribosyltransferase of Corynebacterium efficiens (strain DSM 44549 / YS-314 / AJ 12310 / JCM 11189 / NBRC 100395).